A 517-amino-acid polypeptide reads, in one-letter code: Salicyloyl-CoA 5-hydroxylase (517 aa).

The protein belongs to the aromatic-ring hydroxylase family. KMO subfamily.

It catalyses the reaction 2-hydroxybenzoyl-CoA + NADH + O2 + H(+) = 2,5-dihydroxybenzoyl-CoA + NAD(+) + H2O. In terms of biological role, involved in the degradation of salicylate via a pathway involving coenzyme A derivative. Catalyzes the aromatic hydroxylation of salicylyl-CoA to yield gentisyl-CoA. In Streptomyces sp, this protein is Salicyloyl-CoA 5-hydroxylase.